Here is a 251-residue protein sequence, read N- to C-terminus: Hydroxyacylglutathione hydrolase (251 aa).

7 residues coordinate Zn(2+): H53, H55, D57, H58, H110, D127, and H165.

It belongs to the metallo-beta-lactamase superfamily. Glyoxalase II family. In terms of assembly, monomer. Zn(2+) serves as cofactor.

The catalysed reaction is an S-(2-hydroxyacyl)glutathione + H2O = a 2-hydroxy carboxylate + glutathione + H(+). It functions in the pathway secondary metabolite metabolism; methylglyoxal degradation; (R)-lactate from methylglyoxal: step 2/2. Functionally, thiolesterase that catalyzes the hydrolysis of S-D-lactoyl-glutathione to form glutathione and D-lactic acid. The polypeptide is Hydroxyacylglutathione hydrolase (Pectobacterium atrosepticum (strain SCRI 1043 / ATCC BAA-672) (Erwinia carotovora subsp. atroseptica)).